A 185-amino-acid chain; its full sequence is Putative manganese efflux pump MntP (185 aa).

6 consecutive transmembrane segments (helical) span residues 4–24 (LLLS…SVSL), 43–63 (IFFG…GVPI), 67–87 (IDPF…GKMI), 107–127 (LLLA…FALI), 131–151 (VLLP…FGVL), and 165–185 (QILG…EYCL).

Belongs to the MntP (TC 9.B.29) family.

It localises to the cell membrane. In terms of biological role, probably functions as a manganese efflux pump. In Methanocorpusculum labreanum (strain ATCC 43576 / DSM 4855 / Z), this protein is Putative manganese efflux pump MntP.